We begin with the raw amino-acid sequence, 22 residues long: NADH-ubiquinone oxidoreductase 16 kDa subunit (22 aa).

Complex I is composed of about 45 different subunits.

It is found in the mitochondrion inner membrane. It catalyses the reaction a ubiquinone + NADH + 5 H(+)(in) = a ubiquinol + NAD(+) + 4 H(+)(out). Its function is as follows. Transfer of electrons from NADH to the respiratory chain. The immediate electron acceptor for the enzyme is believed to be ubiquinone. This Solanum tuberosum (Potato) protein is NADH-ubiquinone oxidoreductase 16 kDa subunit.